The primary structure comprises 314 residues: Dihydroorotate dehydrogenase (fumarate) (314 aa).

Residues Lys-46, 70–74, and Asn-130 contribute to the substrate site; that span reads NSMGL. 46–47 is an FMN binding site; sequence KS. Asn-130 contacts FMN. Active-site nucleophile residues include Ser-132 and Cys-133. FMN is bound by residues Lys-167 and Ile-195. 196 to 197 is a substrate binding site; sequence NS. Residues Gly-224, 252 to 253, and 274 to 275 each bind FMN; these read GG and GT.

The protein belongs to the dihydroorotate dehydrogenase family. Type 1 subfamily. As to quaternary structure, homodimer. The cofactor is FMN.

The protein localises to the cytoplasm. It catalyses the reaction (S)-dihydroorotate + fumarate = orotate + succinate. Its pathway is pyrimidine metabolism; UMP biosynthesis via de novo pathway. Functionally, catalyzes the conversion of dihydroorotate to orotate with fumarate as the electron acceptor. The polypeptide is Dihydroorotate dehydrogenase (fumarate) (URA1) (Saccharomyces mikatae (Yeast)).